The following is a 236-amino-acid chain: 2-C-methyl-D-erythritol 4-phosphate cytidylyltransferase (236 aa).

It belongs to the IspD/TarI cytidylyltransferase family. IspD subfamily.

It carries out the reaction 2-C-methyl-D-erythritol 4-phosphate + CTP + H(+) = 4-CDP-2-C-methyl-D-erythritol + diphosphate. The protein operates within isoprenoid biosynthesis; isopentenyl diphosphate biosynthesis via DXP pathway; isopentenyl diphosphate from 1-deoxy-D-xylulose 5-phosphate: step 2/6. Catalyzes the formation of 4-diphosphocytidyl-2-C-methyl-D-erythritol from CTP and 2-C-methyl-D-erythritol 4-phosphate (MEP). In Pseudomonas syringae pv. tomato (strain ATCC BAA-871 / DC3000), this protein is 2-C-methyl-D-erythritol 4-phosphate cytidylyltransferase.